The following is a 463-amino-acid chain: uncharacterized protein (463 aa).

The next 6 membrane-spanning stretches (helical) occupy residues 3 to 23, 88 to 108, 112 to 132, 216 to 236, 245 to 265, and 276 to 296; these read IPPE…SLLV, VAAA…AELA, AIHG…PIAL, FSPA…DFLW, LLLL…SALI, and LPIA…AVAV. Residues 303–322 are disordered; it reads VPGGSPPTSNPAPAAPSSNS. A compositionally biased stretch (pro residues) spans 306 to 316; the sequence is GSPPTSNPAPA. Helical transmembrane passes span 323–343 and 419–439; these read VGSA…APPG and AGTL…AGMV.

This sequence belongs to the mycobacterial PPE family.

It is found in the cell membrane. This is an uncharacterized protein from Mycobacterium tuberculosis (strain CDC 1551 / Oshkosh).